Here is a 325-residue protein sequence, read N- to C-terminus: Replication factor C small subunit (325 aa).

ATP is bound at residue Gly45–Thr52.

The protein belongs to the activator 1 small subunits family. RfcS subfamily. As to quaternary structure, heteromultimer composed of small subunits (RfcS) and large subunits (RfcL).

Part of the RFC clamp loader complex which loads the PCNA sliding clamp onto DNA. This Sulfolobus acidocaldarius (strain ATCC 33909 / DSM 639 / JCM 8929 / NBRC 15157 / NCIMB 11770) protein is Replication factor C small subunit.